Reading from the N-terminus, the 1740-residue chain is MAVEKVMKRDGRIVPFDESRIRWAVQRAMWEVGIRDEKKLDEVVKSIVQRINELYDGKIPHIENIQDIVELELMRAGLFEVAKAYILYRKKKAEIREEKKRILNKKELDEIDKRFSINALRVLASRYLKKDENGNIVESPRELFERVAILAVIPDLLYDERVFDKNGNYSQDLKRVEYYLEHFEEFDRKYSIGKYKLNKYHFERMVNLYKELAEQGKMKVSIDEFLAMLEKGEFNEYEKEINEYFRLMTNQIFMPNTPALINSGRPLGMLSACFVVPIEDDMESIMKAAHDVAMIQKMGGGCIDGKAKIIFENEGEEHLTTMEEMYERYKHLGEFYDEEYNRWGIDVSNVPIYVKSFDPESKRVVKGKVNVIWKYELGKDVTKYEIITNKGTKILTSPWHPFFVLTPDFKIVEKRADELKEGDILIGGMPDGEDYKFIFDYWLAGFIAGDGCFDKYHSHVKGHEYIYDRLRIYDYRIETFEIINDYLEKTFGRKYSIQKDRNIYYIDIKARNITSHYLKLLEGIDNGIPPQILKEGKNAVLSFIAGLFDAEGHVSNKPGIELGMVNKRLIEDVTHYLNALGIKARIREKLRKDGIDYVLHVEEYSSLLRFYELIGKNLQNEEKREKLEKVLSNHKGGNFGLPLNFNAFKEWASEYGVEFKTNGSQTIAIINDERISLGQWHTRNRVSKAVLVKMLRKLYEATKDEEVKRMLHLIEGLEVVRHITTTNEPRTFYDLTVENYQNYLAGENGMIFVHNTGLNFSKLRPEGDIVGTTTGAASGPVSFMHLIDAVSDVIKQGGVRRGANMGILEIWHPDIEKFIHAKEKNIGTNVLSNFNISVGIWEDFWEALKEGKKYPLINPRTGEVVKEVDPKTLFEELAYMAWAKADPGVIFFDVINRRNVLKKAKGGPIRATNPCVVGDTRILTPEGYLKAEEIFSLAKERGKKEAVAVEGIAEEGEPYAYSVEILLPGEEKVEYETVHGKVLAVADPVAVPAYVWKVGRKKVARVKTKEGYEITATLDHKLMTPEGWKEVGKLKEGDKILLPRFEVEEEFGSESIGEDLAFVLGWFIGDGYLNVNDKRAWFYFNAEKEEEIAVRIRDILVKHFGIKAELHRYGNQIKLGVRGEAYRWLENIVKNNEKRIPEIVYRLKPREIAAFLRGLFSADGYVDKDMAIRLTSKSRELLREVQDLLLLFGILSKIYEKPYESEFHYTTKNGEERIYRSKGYYELVITNYSRKLFAEKIGLEGYKMEKLSLKKTKVDQPIVTVESVEVLGEEIVYDFTVPNYHMYISNGFMSHNCGEEPLYEYESCNLASINLAKFVKYDENGKPYFDWDEYAYVIQKVAKYLDNSIDVNKFPLPEIDYNTKLTRRIGVGMMGLADALFKLGIPYNSEEGFKFMRKVTEYLTFYAYKYSVEAAKKRGTFPLYDKTEYPEGKLPVEGFYHPEIWNLPWDKLVEEIKKYGLRNAMVTTCPPTGSVSMIADTSSGIEPVYALVYKKSVTVGEFYYVDPVFEEELKKRGLYSEELLKKISDNYGSVQGLEEIPEDMQRVFVTALDIHWLDHIIAQASIQMWLTDSASKTINMINEATVEDVKAAYLIARFLGCKGVTVYRDGSLSVQVYSVEGEKKKRRFKPKPSEYAKKILLEIVEKEPWIKNFINVDEILNGKKEQLLFSLRPANESKLKVPGREEEVRPGNIPEEKIRELLGVVYCPVCYEKEGKLVELKMESGCATCPVCGWSKCVIS.

Positions 4 to 96 constitute an ATP-cone domain; it reads EKVMKRDGRI…LYRKKKAEIR (93 aa). Substrate contacts are provided by residues T257, 272–273, and G301; that span reads AC. C273 and C1308 are joined by a disulfide. One can recognise a DOD-type homing endonuclease 1 domain in the interval 443 to 582; the sequence is LAGFIAGDGC…VTHYLNALGI (140 aa). The active-site Proton acceptor is N913. Residue 913–914 participates in substrate binding; that stretch reads NP. One can recognise a DOD-type homing endonuclease 2 domain in the interval 1063-1194; it reads VLGWFIGDGY…VQDLLLLFGI (132 aa). C1297 (cysteine radical intermediate) is an active-site residue. Substrate is bound by residues 1297–1299 and 1471–1475; these read CGE and PTGSV. Catalysis depends on E1299, which acts as the Proton acceptor.

It belongs to the ribonucleoside diphosphate reductase class-2 family. It depends on adenosylcob(III)alamin as a cofactor. Post-translationally, this protein undergoes a protein self splicing that involves a post-translational excision of the intervening region (intein) followed by peptide ligation.

It carries out the reaction a 2'-deoxyribonucleoside 5'-diphosphate + [thioredoxin]-disulfide + H2O = a ribonucleoside 5'-diphosphate + [thioredoxin]-dithiol. Functionally, provides the precursors necessary for DNA synthesis. Catalyzes the biosynthesis of deoxyribonucleotides from the corresponding ribonucleotides. The polypeptide is Vitamin B12-dependent ribonucleoside-diphosphate reductase (rnr) (Pyrococcus furiosus (strain ATCC 43587 / DSM 3638 / JCM 8422 / Vc1)).